Reading from the N-terminus, the 364-residue chain is Suberization-associated anionic peroxidase 1 (364 aa).

Residues 1–25 (MGFRLSHLSLALSFVALALAGVAIY) form the signal peptide. Asn-36 is a glycosylation site (N-linked (GlcNAc...) asparagine). 2 cysteine pairs are disulfide-bonded: Cys-81/Cys-160 and Cys-112/Cys-117. The active-site Proton acceptor is the His-110. Asp-111, Val-114, Gly-116, and Asp-118 together coordinate Ca(2+). Residues Asn-127, Asn-162, and Asn-200 are each glycosylated (N-linked (GlcNAc...) asparagine). Disulfide bonds link Cys-167-Cys-353 and Cys-246-Cys-265. Pro-209 is a substrate binding site. Residues Asn-214 and Asn-226 are each glycosylated (N-linked (GlcNAc...) asparagine). Residue His-239 coordinates heme b. Thr-240 is a binding site for Ca(2+). A glycan (N-linked (GlcNAc...) asparagine) is linked at Asn-264. Residues Asp-278, Thr-280, and Asp-285 each coordinate Ca(2+).

It belongs to the peroxidase family. Classical plant (class III) peroxidase subfamily. Ca(2+) serves as cofactor. It depends on heme b as a cofactor.

It localises to the secreted. The enzyme catalyses 2 a phenolic donor + H2O2 = 2 a phenolic radical donor + 2 H2O. Removal of H(2)O(2), oxidation of toxic reductants, biosynthesis and degradation of lignin, suberization, auxin catabolism, response to environmental stresses such as wounding, pathogen attack and oxidative stress. These functions might be dependent on each isozyme/isoform in each plant tissue. In terms of biological role, suggested to catalyze the deposition of the aromatic residues of suberin on the cell wall and thus play a role in cell-suberization. This chain is Suberization-associated anionic peroxidase 1 (TAP1), found in Solanum lycopersicum (Tomato).